The chain runs to 231 residues: Enolase-phosphatase E1 (231 aa).

The interval 206 to 231 (LLERPGNAPQPKHSHPKISSFENFNP) is disordered.

The protein belongs to the HAD-like hydrolase superfamily. MasA/MtnC family. As to quaternary structure, monomer. Requires Mg(2+) as cofactor.

The catalysed reaction is 5-methylsulfanyl-2,3-dioxopentyl phosphate + H2O = 1,2-dihydroxy-5-(methylsulfanyl)pent-1-en-3-one + phosphate. Its pathway is amino-acid biosynthesis; L-methionine biosynthesis via salvage pathway; L-methionine from S-methyl-5-thio-alpha-D-ribose 1-phosphate: step 3/6. It participates in amino-acid biosynthesis; L-methionine biosynthesis via salvage pathway; L-methionine from S-methyl-5-thio-alpha-D-ribose 1-phosphate: step 4/6. Functionally, bifunctional enzyme that catalyzes the enolization of 2,3-diketo-5-methylthiopentyl-1-phosphate (DK-MTP-1-P) into the intermediate 2-hydroxy-3-keto-5-methylthiopentenyl-1-phosphate (HK-MTPenyl-1-P), which is then dephosphorylated to form the acireductone 1,2-dihydroxy-3-keto-5-methylthiopentene (DHK-MTPene). In Leptospira borgpetersenii serovar Hardjo-bovis (strain JB197), this protein is Enolase-phosphatase E1.